We begin with the raw amino-acid sequence, 585 residues long: Glutamine--tRNA ligase (585 aa).

Positions 51-61 (PEPNGYLHIGH) match the 'HIGH' region motif. ATP is bound by residues 52 to 54 (EPN) and 58 to 64 (HIGHAKS). L-glutamine-binding residues include Asp84 and Tyr238. Residues Thr257 and 292 to 293 (RL) each bind ATP. A 'KMSKS' region motif is present at residues 299–303 (ITSKR).

This sequence belongs to the class-I aminoacyl-tRNA synthetase family. In terms of assembly, monomer.

It is found in the cytoplasm. The enzyme catalyses tRNA(Gln) + L-glutamine + ATP = L-glutaminyl-tRNA(Gln) + AMP + diphosphate. In Cupriavidus taiwanensis (strain DSM 17343 / BCRC 17206 / CCUG 44338 / CIP 107171 / LMG 19424 / R1) (Ralstonia taiwanensis (strain LMG 19424)), this protein is Glutamine--tRNA ligase.